The following is a 477-amino-acid chain: Probable cytosolic Fe-S cluster assembly factor GG21400 (477 aa).

Residues C23, C68, C71, C74, C187, C243, C395, and C399 each coordinate [4Fe-4S] cluster.

The protein belongs to the NARF family.

Functionally, component of the cytosolic iron-sulfur (Fe/S) protein assembly machinery. Required for maturation of extramitochondrial Fe/S proteins. The chain is Probable cytosolic Fe-S cluster assembly factor GG21400 from Drosophila erecta (Fruit fly).